Reading from the N-terminus, the 123-residue chain is uncharacterized protein (123 aa).

Disordered stretches follow at residues 1-21 and 82-123; these read MGAP…KLFK and EKTA…EDES.

This is an uncharacterized protein from Homo sapiens (Human).